The following is a 227-amino-acid chain: Thiamine-phosphate synthase (227 aa).

4-amino-2-methyl-5-(diphosphooxymethyl)pyrimidine contacts are provided by residues 50 to 54 and D82; that span reads QFRQK. Mg(2+) contacts are provided by D83 and D102. 4-amino-2-methyl-5-(diphosphooxymethyl)pyrimidine is bound at residue T121. 147 to 149 serves as a coordination point for 2-[(2R,5Z)-2-carboxy-4-methylthiazol-5(2H)-ylidene]ethyl phosphate; the sequence is TTS. Residue K150 coordinates 4-amino-2-methyl-5-(diphosphooxymethyl)pyrimidine. 2-[(2R,5Z)-2-carboxy-4-methylthiazol-5(2H)-ylidene]ethyl phosphate contacts are provided by residues G178 and 198-199; that span reads LS.

Belongs to the thiamine-phosphate synthase family. Mg(2+) is required as a cofactor.

The catalysed reaction is 2-[(2R,5Z)-2-carboxy-4-methylthiazol-5(2H)-ylidene]ethyl phosphate + 4-amino-2-methyl-5-(diphosphooxymethyl)pyrimidine + 2 H(+) = thiamine phosphate + CO2 + diphosphate. It carries out the reaction 2-(2-carboxy-4-methylthiazol-5-yl)ethyl phosphate + 4-amino-2-methyl-5-(diphosphooxymethyl)pyrimidine + 2 H(+) = thiamine phosphate + CO2 + diphosphate. It catalyses the reaction 4-methyl-5-(2-phosphooxyethyl)-thiazole + 4-amino-2-methyl-5-(diphosphooxymethyl)pyrimidine + H(+) = thiamine phosphate + diphosphate. The protein operates within cofactor biosynthesis; thiamine diphosphate biosynthesis; thiamine phosphate from 4-amino-2-methyl-5-diphosphomethylpyrimidine and 4-methyl-5-(2-phosphoethyl)-thiazole: step 1/1. Its function is as follows. Condenses 4-methyl-5-(beta-hydroxyethyl)thiazole monophosphate (THZ-P) and 2-methyl-4-amino-5-hydroxymethyl pyrimidine pyrophosphate (HMP-PP) to form thiamine monophosphate (TMP). The protein is Thiamine-phosphate synthase of Salinibacter ruber (strain DSM 13855 / M31).